A 459-amino-acid chain; its full sequence is Flagellar radial spoke protein 6 (459 aa).

Position 267 is an asymmetric dimethylarginine (arginine 267). Residues 309–330 (QGRTVTHKRDPPDEEEEPEKNF) are disordered. At arginine 398 the chain carries Asymmetric dimethylarginine. The tract at residues 418–459 (CPPPPPVPQWGAPAAGVEGGQQLLLECNDLPPKPAPPEEEDE) is disordered.

It belongs to the flagellar radial spoke RSP4/6 family. In terms of assembly, the radial spoke head is made of five different polypeptides (RSP1, RSP4, RSP6, RSP9, and RSP10). In terms of processing, asymmetrically dimethylated at Arg-267 and Arg-398 during flagellum resorption. Probably methylated by PRMT1.

It localises to the cytoplasm. The protein resides in the cytoskeleton. Its subcellular location is the flagellum axoneme. In terms of biological role, flagellar radial spokes contribute to the regulation of dynein arm activity and thus the pattern of flagellar bending. They consist of a thin stalk, which is attached to the a subfiber of the outer doublet microtubule, and a bulbous head, which is attached to the stalk and appears to interact with the projections from the central pair of microtubules. This is Flagellar radial spoke protein 6 (RSP6) from Chlamydomonas reinhardtii (Chlamydomonas smithii).